Reading from the N-terminus, the 347-residue chain is Protein XRP2 (347 aa).

Residues 1–11 (MGCCFTKRRKS) are compositionally biased toward basic residues. Residues 1–22 (MGCCFTKRRKSEKAEGEEEQPK) are disordered. Gly-2 carries the N-myristoyl glycine lipid modification. Cys-3 carries the S-palmitoyl cysteine lipid modification. A C-CAP/cofactor C-like domain is found at 21–176 (PKLYSWDQRE…IWSHVHDFTP (156 aa)). Residues 95–96 (GS) and 112–115 (QQFR) each bind GTP.

Belongs to the TBCC family. As to quaternary structure, found in a complex with ARL3, RP2 and UNC119 (or UNC119B); RP2 induces hydrolysis of GTP ARL3 in the complex, leading to the release of UNC119 (or UNC119B). Interacts with ARL3; interaction is direct and stimulated with the activated GTP-bound form of ARL3. In terms of processing, myristoylated on Gly-2; which may be required for membrane targeting. Post-translationally, palmitoylated on Cys-3; which may be required for plasma membrane targeting. In terms of tissue distribution, retina (at protein level).

Its subcellular location is the cell membrane. It is found in the cell projection. The protein localises to the cilium. Its function is as follows. Acts as a GTPase-activating protein (GAP) involved in trafficking between the Golgi and the ciliary membrane. Involved in localization of proteins, such as NPHP3, to the cilium membrane by inducing hydrolysis of GTP ARL3, leading to the release of UNC119 (or UNC119B). Acts as a GTPase-activating protein (GAP) for tubulin in concert with tubulin-specific chaperone C, but does not enhance tubulin heterodimerization. Acts as a guanine nucleotide dissociation inhibitor towards ADP-ribosylation factor-like proteins. This chain is Protein XRP2 (Rp2), found in Mus musculus (Mouse).